Reading from the N-terminus, the 89-residue chain is Small ribosomal subunit protein uS15 (89 aa).

Residues 1–18 (MSLDTAEKQKLIENHQVH) are compositionally biased toward basic and acidic residues. The interval 1 to 23 (MSLDTAEKQKLIENHQVHPTDTG) is disordered.

Belongs to the universal ribosomal protein uS15 family. Part of the 30S ribosomal subunit. Forms a bridge to the 50S subunit in the 70S ribosome, contacting the 23S rRNA.

In terms of biological role, one of the primary rRNA binding proteins, it binds directly to 16S rRNA where it helps nucleate assembly of the platform of the 30S subunit by binding and bridging several RNA helices of the 16S rRNA. Functionally, forms an intersubunit bridge (bridge B4) with the 23S rRNA of the 50S subunit in the ribosome. The protein is Small ribosomal subunit protein uS15 of Prochlorococcus marinus (strain AS9601).